The primary structure comprises 487 residues: Putative beta-glucosidase 35 (487 aa).

The signal sequence occupies residues 1–27 (MGIRMGRRLLLITLLLGALLCNNVAYA). Gln48 lines the a beta-D-glucoside pocket. 2 N-linked (GlcNAc...) asparagine glycosylation sites follow: Asn76 and Asn116. A beta-D-glucoside contacts are provided by residues His151 and 200–201 (NE). Glu201 (proton donor) is an active-site residue. A disulfide bridge connects residues Cys220 and Cys228. Tyr344 contacts a beta-D-glucoside. An N-linked (GlcNAc...) asparagine glycan is attached at Asn369. Glu414 is a binding site for a beta-D-glucoside. Glu414 functions as the Nucleophile in the catalytic mechanism. Asn418 and Asn419 each carry an N-linked (GlcNAc...) asparagine glycan. Position 458 (Phe458) interacts with a beta-D-glucoside.

This sequence belongs to the glycosyl hydrolase 1 family.

The enzyme catalyses Hydrolysis of terminal, non-reducing beta-D-glucosyl residues with release of beta-D-glucose.. This chain is Putative beta-glucosidase 35 (BGLU35), found in Oryza sativa subsp. japonica (Rice).